The chain runs to 271 residues: Putative phosphoenolpyruvate synthase regulatory protein (271 aa).

151-158 (GVSRSGKT) lines the ADP pocket.

Belongs to the pyruvate, phosphate/water dikinase regulatory protein family. PSRP subfamily.

It carries out the reaction [pyruvate, water dikinase] + ADP = [pyruvate, water dikinase]-phosphate + AMP + H(+). The enzyme catalyses [pyruvate, water dikinase]-phosphate + phosphate + H(+) = [pyruvate, water dikinase] + diphosphate. Its function is as follows. Bifunctional serine/threonine kinase and phosphorylase involved in the regulation of the phosphoenolpyruvate synthase (PEPS) by catalyzing its phosphorylation/dephosphorylation. The chain is Putative phosphoenolpyruvate synthase regulatory protein from Burkholderia ambifaria (strain MC40-6).